A 721-amino-acid chain; its full sequence is Polyribonucleotide nucleotidyltransferase (721 aa).

Mg(2+) contacts are provided by Asp-495 and Asp-501. The KH domain occupies 562 to 621 (PRITTIKIRPERIKDIIGPGGKTIKDITARTGTSINIEDDGSVSIASPNQDKVEEAIKMI). The region spanning 631–699 (GRIYLGTVRK…RSGKIRLSRK (69 aa)) is the S1 motif domain. Residues 699–721 (KEALADSAKKSEGTEPPKGEPAK) form a disordered region.

It belongs to the polyribonucleotide nucleotidyltransferase family. The cofactor is Mg(2+).

The protein resides in the cytoplasm. The catalysed reaction is RNA(n+1) + phosphate = RNA(n) + a ribonucleoside 5'-diphosphate. Its function is as follows. Involved in mRNA degradation. Catalyzes the phosphorolysis of single-stranded polyribonucleotides processively in the 3'- to 5'-direction. In Anaeromyxobacter dehalogenans (strain 2CP-1 / ATCC BAA-258), this protein is Polyribonucleotide nucleotidyltransferase.